Consider the following 116-residue polypeptide: uncharacterized protein (116 aa).

3 helical membrane-spanning segments follow: residues 8-28 (FMIYQVIGTVIGIAGIIVSFA), 39-59 (GLLLWLILWVSVILFSLNPPF), and 75-95 (FLLIIGILGAYYLLFRIYLMV).

It to M.jannaschii MJ1580.

The protein resides in the cell membrane. This is an uncharacterized protein from Methanothermobacter thermautotrophicus (strain ATCC 29096 / DSM 1053 / JCM 10044 / NBRC 100330 / Delta H) (Methanobacterium thermoautotrophicum).